A 975-amino-acid chain; its full sequence is MKLEHPDRLMNRTPLSLAALETHDAFAERHIGPDAASQQAMLDTLGFASRAALIDAVIPASIRRNETLPLGPFSQPKSEAEALAALRALADKNQVFRSYIGQGYYDTHTPAVILRNVLENPAWYTAYTPYQPEISQGRLEALLNFQQMVTDLTGLAISNASLLDEATAAAEAMTLLQRVGKPKSNVFYVADDVLPQTLEVIRTRALPIGIDVKTGPAADAAQSNAFGVLLQYPGVNGDVRDYRALTDAIHAAGGHVVVAADLLALTVLTPPGEWGADVAVGNTQRFGVPMGFGGPHAAYLAVRDEFKRQMPGRLVGVTVDAQGKPALRLALQTREQHIRREKATSNVCTAQALLAIMASMYAVYHGPHGLKTIALRVNRIAALFAAGVKQLGFATVNDTFFDTVTVDTGARTAQVHAFANAKRINLRRVSDARVGVSIDETTTRDDLADLLAVFAQAAGGTAPSVDALDAGLGGEAALPASLVRTSAYLTHHVFNRHHSETEMLRYLRSLSDKDLALDRSMIPLGSCTMKLNATSEMLPVTWPEFGRIHPFAPAEQTVGYREMIDQLEQMLVAATGYAAVSLQPNAGSQGEYAGLLIIHAYHASRGEGHRDVCLIPASAHGTNPASAHMAGMKVVVVACDAQGNVDIADLKAKAEQHSANLAAIMITYPSTHGVFEQNVREICEIVHAHGGQVYVDGANMNAMVGLTAPGQFGGDVSHLNLHKTFCIPHGGGGPGVGPVAVGAHLAKFLPNQRSTGYTRGEDGIGAVSAAPYGSASILPISWMYIAMMGAKNLTAATETAILNANYIAKRLAPHYPVLYSGPGGLVAHECILDLRPIKESSGITVDDVAKRLMDYGFHAPTMSFPVPGTLMVEPTESESKEELDRFIDAMIAIRDEIRAVEEGRADREDNPLRHAPHTAAVVTANEWPHAYSREQAAYPVASLGTNKYWPPVGRADNAYGDRNLFCACVPMSDYA.

Lys723 is subject to N6-(pyridoxal phosphate)lysine.

Belongs to the GcvP family. In terms of assembly, the glycine cleavage system is composed of four proteins: P, T, L and H. Pyridoxal 5'-phosphate serves as cofactor.

It catalyses the reaction N(6)-[(R)-lipoyl]-L-lysyl-[glycine-cleavage complex H protein] + glycine + H(+) = N(6)-[(R)-S(8)-aminomethyldihydrolipoyl]-L-lysyl-[glycine-cleavage complex H protein] + CO2. Its function is as follows. The glycine cleavage system catalyzes the degradation of glycine. The P protein binds the alpha-amino group of glycine through its pyridoxal phosphate cofactor; CO(2) is released and the remaining methylamine moiety is then transferred to the lipoamide cofactor of the H protein. The sequence is that of Glycine dehydrogenase (decarboxylating) from Burkholderia multivorans (strain ATCC 17616 / 249).